Reading from the N-terminus, the 88-residue chain is MLATDKKQEIISTYKLHDSDTGSPEVQIAILTERITYLTEHFKTHKKDHHSRRGLLKIVGQRRGLLDYLKKKDVERYRSIIEKLGIRR.

The protein belongs to the universal ribosomal protein uS15 family. In terms of assembly, part of the 30S ribosomal subunit. Forms a bridge to the 50S subunit in the 70S ribosome, contacting the 23S rRNA.

One of the primary rRNA binding proteins, it binds directly to 16S rRNA where it helps nucleate assembly of the platform of the 30S subunit by binding and bridging several RNA helices of the 16S rRNA. Its function is as follows. Forms an intersubunit bridge (bridge B4) with the 23S rRNA of the 50S subunit in the ribosome. This chain is Small ribosomal subunit protein uS15, found in Geotalea uraniireducens (strain Rf4) (Geobacter uraniireducens).